The primary structure comprises 495 residues: Amorpha-4,11-diene 12-monooxygenase (495 aa).

Topologically, residues 1–6 (MKSILK) are cytoplasmic. The helical; Signal-anchor for type II membrane protein transmembrane segment at 7–29 (AMALSLTTSIALATILLFVYKFA) threads the bilayer. The Lumenal portion of the chain corresponds to 30 to 495 (TRSKSTKKSL…KTELLLVPSF (466 aa)). N-linked (GlcNAc...) asparagine glycans are attached at residues N176, N261, N267, N386, and N417. Position 439 (C439) interacts with heme.

Belongs to the cytochrome P450 family. Heme serves as cofactor. As to expression, highly expressed both in apical and sub-apical cells of glandular secretory trichomes. Detected in flower buds, leaves and roots. Also present in non-glandular trichome cells.

It is found in the endoplasmic reticulum membrane. The catalysed reaction is (+)-amorpha-4,11-diene + 3 reduced [NADPH--hemoprotein reductase] + 3 O2 = (+)-artemisinate + 3 oxidized [NADPH--hemoprotein reductase] + 4 H2O + 4 H(+). It functions in the pathway sesquiterpene biosynthesis. Its function is as follows. Involved in the biosynthesis of the antimalarial endoperoxide artemisinin. Catalyzes three consecutive oxidations of amorpha-4,11-diene to produce artemisinic acid, with artemisinic alcohol and artemisinic aldehyde as intermediates products, but is unable to oxidize germacrene A. No activity with limonene, alpha-pinene, beta-pinene, pinocarveol, (-)-alloisolongifolene, caryophyllene, (-)-alpha-gurjunene, (+)-gamma-gurjunene, (+)-ledene, (+)-beta-selinene and (+)-valencene as substrates. This is Amorpha-4,11-diene 12-monooxygenase from Artemisia annua (Sweet wormwood).